The primary structure comprises 204 residues: MFDIGFSELLLIFIVGLVVLGPKRLPVAIRTVMGWVRTIRGLAANVQNELAQELKLQELQESIKKAENLNLKNLSPDLAKTVEELKASAEKMKADLDKAAAETNTTIDEQIQILREENAQTQSNDVATSDTVEKSIADEFSIKNDENPTALSSVVSSVDSIQNGQSDLELDAQAEVDRQLAAMMDKYAPPDDVAENPISTEKTS.

The chain crosses the membrane as a helical span at residues 1 to 21 (MFDIGFSELLLIFIVGLVVLG). Polar residues predominate over residues 154–166 (VVSSVDSIQNGQS). Residues 154-204 (VVSSVDSIQNGQSDLELDAQAEVDRQLAAMMDKYAPPDDVAENPISTEKTS) form a disordered region.

Belongs to the TatB family. In terms of assembly, the Tat system comprises two distinct complexes: a TatABC complex, containing multiple copies of TatA, TatB and TatC subunits, and a separate TatA complex, containing only TatA subunits. Substrates initially bind to the TatABC complex, which probably triggers association of the separate TatA complex to form the active translocon.

The protein resides in the cell inner membrane. Functionally, part of the twin-arginine translocation (Tat) system that transports large folded proteins containing a characteristic twin-arginine motif in their signal peptide across membranes. Together with TatC, TatB is part of a receptor directly interacting with Tat signal peptides. TatB may form an oligomeric binding site that transiently accommodates folded Tat precursor proteins before their translocation. This Mannheimia succiniciproducens (strain KCTC 0769BP / MBEL55E) protein is Sec-independent protein translocase protein TatB.